The sequence spans 607 residues: F-box protein At-B (607 aa).

The F-box domain maps to 9–47; the sequence is LAEEILKRLDLENLCSVACVSTTLRSAVVSGVLPSLTSL. 16 LRR repeats span residues 51–76, 77–99, 100–125, 130–155, 228–253, 262–286, 295–320, 321–346, 347–372, 373–397, 398–422, 424–447, 448–477, 478–503, 504–536, and 537–563; these read VFSPDDETLNHVLRGCIGLSSLTLNC, LRLNAASVRGVLGPHLRELHLLR, CSLLSSTVLTYIGTLCPNLRVLTLEM, SPDVFQSNLTQMLNGCPYLESLQLNI, LDLISDRLIIAITGSLPQLVKLDLED, DNDLTYTGLQALGFCQQLTSLSLVR, FKRINDMGIFLLSEACKGLESVRLGG, FPKVSDAGFASLLHSCRNLKKFEVRG, AFLLSDLAFHDVTGSSCSLQEVRLST, CPLITSEAVKKLGLCGNLEVLDLGS, CKSISDSCLNSVSALRKLTSLNLAG, DVTDSGMLALGKSDVPITQLSLRG, CRRVSDRGISYLLNNEGTISKTLSTLDLGH, MPGISDRAIHTITHCCKALTELSIRS, CFHVTDSSIESLATWERQAEGGSKQLRKLNVHN, and CVSLTTGALRWLSKPSFAGLHWLGMGQ.

The chain is F-box protein At-B (ATB) from Arabidopsis thaliana (Mouse-ear cress).